We begin with the raw amino-acid sequence, 490 residues long: MDHTDNELQGTNSSGSLGGLDVRRRIPIKLISKQANKAKPAPRTQRTINRMPAKAPPGDEGFDYNEEERYDCKGGELFGNQRRFPGHLFWDFQINILGEKDDTPVHFCDKCGLPIKIYGRMIPCKHVFCYDCAILHEKKGDKMCPGCSDPVQRIEQCTRGSLFMCSIVQGCKRTYLSQRDLQAHINHRHMRAGKPVTRASLENVHPPIAPPPTEIPERFIMPPDKHHMSHIPPKQHIMMPPPPLQHVPHEHYNQPHEDIRAPPAELSMAPPPPRSVSQETFRISTRKHSNLITVPIQDDSNSGAREPPPPAPAPAHHHPEYQGQPVVSHPHHIMPPQQHYAPPPPPPPPISHPMPHPPQAAGTPHLVYSQAPPPPMTSAPPPITPPPGHIIAQMPPYMNHPPPGPPPPQHGGPPVTAPPPHHYNPNSLPQFTEDQGTLSPPFTQPGGMSPGIWPAPRGPPPPPRLQGPPSQTPLPGPHHPDQTRYRPYYQ.

Residues 34 to 60 (QANKAKPAPRTQRTINRMPAKAPPGDE) are disordered. An RING-type zinc finger spans residues 108 to 148 (CDKCGLPIKIYGRMIPCKHVFCYDCAILHEKKGDKMCPGCS). Positions 147-205 (CSDPVQRIEQCTRGSLFMCSIVQGCKRTYLSQRDLQAHINHRHMRAGKPVTRASLENVH) are HYB domain. The segment at 163 to 189 (FMCSIVQGCKRTYLSQRDLQAHINHRH) adopts a C2H2-type zinc-finger fold. A phosphoserine mark is found at Ser-200, Ser-284, and Ser-289. The segment at 254–490 (QPHEDIRAPP…DQTRYRPYYQ (237 aa)) is disordered. Pro residues-rich tracts occupy residues 341-358 (APPP…PHPP), 371-388 (APPP…PPPG), and 398-422 (MNHP…PPHH). A compositionally biased stretch (polar residues) spans 426-441 (NSLPQFTEDQGTLSPP). Residues 456 to 477 (PRGPPPPPRLQGPPSQTPLPGP) show a composition bias toward pro residues.

The protein belongs to the Hakai family. Homodimer. Interacts with tyrosine-phosphorylated SRC substrates. Component of the WMM complex, a N6-methyltransferase complex composed of a catalytic subcomplex, named MAC, and of an associated subcomplex, named MACOM. The MAC subcomplex is composed of METTL3 and METTL14. The MACOM subcomplex is composed of WTAP, ZC3H13, CBLL1/HAKAI, VIRMA, and, in some cases of RBM15 (RBM15 or RBM15B). Also a component of a MACOM-like complex, named WTAP complex, composed of WTAP, ZC3H13, CBLL1, VIRMA, RBM15, BCLAF1 and THRAP3. Post-translationally, phosphorylated on tyrosine residues.

It localises to the nucleus speckle. It is found in the nucleus. The protein localises to the nucleoplasm. Its subcellular location is the cytoplasm. The catalysed reaction is S-ubiquitinyl-[E2 ubiquitin-conjugating enzyme]-L-cysteine + [acceptor protein]-L-lysine = [E2 ubiquitin-conjugating enzyme]-L-cysteine + N(6)-ubiquitinyl-[acceptor protein]-L-lysine.. Its pathway is protein modification; protein ubiquitination. Functionally, E3 ubiquitin-protein ligase that mediates ubiquitination of several tyrosine-phosphorylated Src substrates, including CDH1, CTTN and DOK1. Targets CDH1 for endocytosis and degradation. Associated component of the WMM complex, a complex that mediates N6-methyladenosine (m6A) methylation of RNAs, a modification that plays a role in the efficiency of mRNA splicing and RNA processing. Its function in the WMM complex is unknown. This Macaca fascicularis (Crab-eating macaque) protein is E3 ubiquitin-protein ligase Hakai.